The primary structure comprises 732 residues: uncharacterized protein (732 aa).

The TR mART core domain occupies 163–390; that stretch reads YYTINELNYL…FGIVAKKKYE (228 aa). Active-site residues include R285, S309, and E354.

This is an uncharacterized protein from Acanthamoeba polyphaga mimivirus (APMV).